Reading from the N-terminus, the 383-residue chain is Protein COS7 (383 aa).

Residues 1-42 lie on the Cytoplasmic side of the membrane; it reads MKENEVKDEKSVDVLSFKQLESQKIVLPQDLFRSSFTWFCYE. Residues 43–63 form a helical membrane-spanning segment; it reads IYKSLAFRIWMLLWLPLSVWW. Topologically, residues 64–72 are extracellular; sequence KLSNNCIYP. A helical transmembrane segment spans residues 73-93; that stretch reads LIVSLLVLFLGPIFVLVICGL. The Cytoplasmic portion of the chain corresponds to 94 to 232; it reads SRKRSLSKQL…RSKLTWFLKR (139 aa). A helical transmembrane segment spans residues 233 to 253; that stretch reads IFTIYSLPLWLAFLNCICVSQ. H254 is a topological domain (extracellular). The helical transmembrane segment at 255–275 threads the bilayer; the sequence is FCLAFRILCPGLFFLMMVWLF. Residues 276-383 lie on the Cytoplasmic side of the membrane; sequence QNMRTTALLV…SRNEESLMKK (108 aa).

This sequence belongs to the DUP/COS family.

It is found in the membrane. This is Protein COS7 (COS7) from Saccharomyces cerevisiae (strain ATCC 204508 / S288c) (Baker's yeast).